We begin with the raw amino-acid sequence, 459 residues long: DIMBOA UDP-glucosyltransferase BX8 (459 aa).

The active-site Proton acceptor is the His-19. An anthocyanidin is bound at residue His-19. Asp-119 (charge relay) is an active-site residue. UDP-alpha-D-glucose is bound by residues Thr-141, Ala-340, Gln-342, His-357, Trp-360, Asn-361, Ser-362, and Glu-365. Gly-380 lines the an anthocyanidin pocket. Positions 381 and 382 each coordinate UDP-alpha-D-glucose.

It belongs to the UDP-glycosyltransferase family. Mg(2+) serves as cofactor. It depends on Ca(2+) as a cofactor. In terms of tissue distribution, expressed at the same levels in roots and shoots.

The enzyme catalyses DIMBOA + UDP-alpha-D-glucose = DIMBOA beta-D-glucoside + UDP + H(+). It catalyses the reaction DIBOA + UDP-alpha-D-glucose = DIBOA beta-D-glucoside + UDP + H(+). Its function is as follows. Glucosyltransferase involved in the last step of benzoxazinoid glucoside biosynthesis. Catalyzes the glucosylation of hydroxamic acids utilizing UDP-glucose as glucose doner, reducing the toxicity of these natural insecticides for storage. Can use DIMBOA and DIBOA as substrates, HMBOA (2-hydroxy-7-methoxy-2H-1,4-benzoxazin-3(4H)-one) and HBOA (2-hydroxy-2H-1,4-benzoxazin-3(4H)-one) with a lower efficiency, but not indole acetic acid or quercitin. In Zea mays (Maize), this protein is DIMBOA UDP-glucosyltransferase BX8 (Bx8).